A 584-amino-acid chain; its full sequence is Beta-fructofuranosidase, insoluble isoenzyme CWINV1 (584 aa).

Residues methionine 1–alanine 28 form the signal peptide. Residues tryptophan 63 to aspartate 66, glutamine 82, tryptophan 90, and tryptophan 125 to serine 126 contribute to the substrate site. Aspartate 66 is a catalytic residue. N-linked (GlcNAc...) asparagine glycosylation is found at asparagine 159 and asparagine 186. Substrate contacts are provided by residues arginine 191–aspartate 192, glutamate 246, and aspartate 282. Residues asparagine 342 and asparagine 446 are each glycosylated (N-linked (GlcNAc...) asparagine). An intrachain disulfide couples cysteine 442 to cysteine 491.

It belongs to the glycosyl hydrolase 32 family. As to expression, expressed in seedlings, leaves, flowers, and seeds.

The protein resides in the secreted. It is found in the extracellular space. The protein localises to the apoplast. It localises to the cell wall. It catalyses the reaction Hydrolysis of terminal non-reducing beta-D-fructofuranoside residues in beta-D-fructofuranosides.. Its function is as follows. Beta-fructofuranosidase that can use sucrose and 1-kestose, and, to a lower extent, neokestose and levan, as substrates, but not inuline. This Arabidopsis thaliana (Mouse-ear cress) protein is Beta-fructofuranosidase, insoluble isoenzyme CWINV1 (CWINV1).